The chain runs to 307 residues: Nicotinamide/nicotinic acid mononucleotide adenylyltransferase 2 (307 aa).

Positions 16 and 17 each coordinate NAD(+). Position 24 (His-24) interacts with ATP. NAD(+) is bound by residues Trp-92 and Thr-95. Residues Cys-164 and Cys-165 are each lipidated (S-palmitoyl cysteine). Residues Gly-200, Asp-202, Leu-212, Trp-213, and Arg-232 each contribute to the NAD(+) site. Thr-271–Arg-274 is an ATP binding site.

It belongs to the eukaryotic NMN adenylyltransferase family. In terms of assembly, monomer. Mg(2+) serves as cofactor. In terms of processing, degraded in response to injured neurite. Degradation is caused by polyubiquitination by MYCBP2 after recognition by FBXO45. Palmitoylated; palmitoylation is required for membrane association.

Its subcellular location is the golgi apparatus membrane. The protein localises to the cytoplasmic vesicle membrane. It localises to the cytoplasm. The protein resides in the cell projection. It is found in the axon. It catalyses the reaction beta-nicotinamide D-ribonucleotide + ATP + H(+) = diphosphate + NAD(+). It carries out the reaction nicotinate beta-D-ribonucleotide + ATP + H(+) = deamido-NAD(+) + diphosphate. It functions in the pathway cofactor biosynthesis; NAD(+) biosynthesis; NAD(+) from nicotinamide D-ribonucleotide: step 1/1. Its pathway is cofactor biosynthesis; NAD(+) biosynthesis; deamido-NAD(+) from nicotinate D-ribonucleotide: step 1/1. Its activity is regulated as follows. Inhibited by P1-(adenosine-5')-P3-(nicotinamide-riboside-5')-triphosphate (Np3AD) and P1-(adenosine-5')-P4-(nicotinamide-riboside-5')-tetraphosphate (Np4AD). Nicotinamide/nicotinate-nucleotide adenylyltransferase that acts as an axon maintenance factor. Axon survival factor required for the maintenance of healthy axons: acts by delaying Wallerian axon degeneration, an evolutionarily conserved process that drives the loss of damaged axons. Catalyzes the formation of NAD(+) from nicotinamide mononucleotide (NMN) and ATP. Can also use the deamidated form; nicotinic acid mononucleotide (NaMN) as substrate but with a lower efficiency. Cannot use triazofurin monophosphate (TrMP) as substrate. Also catalyzes the reverse reaction, i.e. the pyrophosphorolytic cleavage of NAD(+). For the pyrophosphorolytic activity prefers NAD(+), NADH and NaAD as substrates and degrades nicotinic acid adenine dinucleotide phosphate (NHD) less effectively. Fails to cleave phosphorylated dinucleotides NADP(+), NADPH and NaADP(+). Also acts as an activator of ADP-ribosylation by supporting the catalytic activity of PARP16 and promoting mono-ADP-ribosylation of ribosomes by PARP16. May be involved in the maintenance of axonal integrity. This is Nicotinamide/nicotinic acid mononucleotide adenylyltransferase 2 (NMNAT2) from Pongo abelii (Sumatran orangutan).